Here is a 316-residue protein sequence, read N- to C-terminus: Thymidylate synthase (316 aa).

DUMP is bound by residues R23 and R178–R179. C198 acts as the Nucleophile in catalysis. DUMP is bound by residues R218–D221, N229, and H259–Y261. D221 is a binding site for (6R)-5,10-methylene-5,6,7,8-tetrahydrofolate. A315 is a binding site for (6R)-5,10-methylene-5,6,7,8-tetrahydrofolate.

Belongs to the thymidylate synthase family. Bacterial-type ThyA subfamily. In terms of assembly, homodimer.

The protein localises to the cytoplasm. It carries out the reaction dUMP + (6R)-5,10-methylene-5,6,7,8-tetrahydrofolate = 7,8-dihydrofolate + dTMP. It functions in the pathway pyrimidine metabolism; dTTP biosynthesis. Catalyzes the reductive methylation of 2'-deoxyuridine-5'-monophosphate (dUMP) to 2'-deoxythymidine-5'-monophosphate (dTMP) while utilizing 5,10-methylenetetrahydrofolate (mTHF) as the methyl donor and reductant in the reaction, yielding dihydrofolate (DHF) as a by-product. This enzymatic reaction provides an intracellular de novo source of dTMP, an essential precursor for DNA biosynthesis. In Lacticaseibacillus casei (Lactobacillus casei), this protein is Thymidylate synthase.